The following is a 35-amino-acid chain: MSDINATRLPIWGIGCNPCVGDDVTSVLTRGEALC.

Positions 1 to 10 (MSDINATRLP) are excised as a propeptide. The residue at position 11 (I11) is a (3R,4R)-4,5-dihydroxyisoleucine; in form alpha-amanitin. Residue I11 is modified to (3R,4S)-4-hydroxyisoleucine; in form gamma-amanitin. The segment at residues 11 to 18 (IWGIGCNP) is a cross-link (cyclopeptide (Ile-Pro)). The 2'-cysteinyl-6'-hydroxytryptophan sulfoxide (Trp-Cys) cross-link spans 12-16 (WGIGC). Position 18 is a 4-hydroxyproline (P18). Positions 19–35 (CVGDDVTSVLTRGEALC) are excised as a propeptide.

It belongs to the MSDIN fungal toxin family. Post-translationally, processed by the macrocyclase-peptidase enzyme POPB to yield a toxic cyclic octapeptide. POPB first removes 10 residues from the N-terminus. Conformational trapping of the remaining peptide forces the enzyme to release this intermediate rather than proceed to macrocyclization. The enzyme rebinds the remaining peptide in a different conformation and catalyzes macrocyclization of the N-terminal 8 residues. As to expression, expressed in basidiocarps.

Functionally, major toxin belonging to the bicyclic octapeptides amatoxins that acts by binding non-competitively to RNA polymerase II and greatly slowing the elongation of transcripts from target promoters. This is Alpha-amanitin proprotein 1 from Amanita exitialis (Guangzhou destroying angel).